We begin with the raw amino-acid sequence, 206 residues long: Small ribosomal subunit protein uS4 (206 aa).

Residues 96 to 158 form the S4 RNA-binding domain; that stretch reads SRLDNVVYRM…AKGQLRIKGA (63 aa).

It belongs to the universal ribosomal protein uS4 family. In terms of assembly, part of the 30S ribosomal subunit. Contacts protein S5. The interaction surface between S4 and S5 is involved in control of translational fidelity.

In terms of biological role, one of the primary rRNA binding proteins, it binds directly to 16S rRNA where it nucleates assembly of the body of the 30S subunit. Its function is as follows. With S5 and S12 plays an important role in translational accuracy. This chain is Small ribosomal subunit protein uS4, found in Coxiella burnetii (strain CbuK_Q154) (Coxiella burnetii (strain Q154)).